The sequence spans 61 residues: Metallothionein-2 (61 aa).

Position 1 is an N-acetylmethionine (Met-1). Positions 1-29 are beta; it reads MDPNCSCAAGGSCTCAGSCKCKECRCTSC. Residues Cys-5, Cys-7, Cys-13, Cys-15, Cys-19, Cys-21, Cys-24, Cys-26, Cys-29, Cys-33, Cys-34, Cys-36, Cys-37, Cys-41, Cys-44, Cys-48, Cys-50, and Cys-57 each contribute to the a divalent metal cation site. The segment at 30–61 is alpha; that stretch reads KKSCCSCCPVGCAKCAQGCICKGASDKCSCCA. A Phosphoserine modification is found at Ser-58. A divalent metal cation-binding residues include Cys-59 and Cys-60.

Belongs to the metallothionein superfamily. Type 1 family. Interacts with EOLA1.

Metallothioneins have a high content of cysteine residues that bind various heavy metals; these proteins are transcriptionally regulated by both heavy metals and glucocorticoids. This Canis lupus familiaris (Dog) protein is Metallothionein-2 (MT2A).